The chain runs to 570 residues: Probable glucomannan 4-beta-mannosyltransferase 11 (570 aa).

Residues 57–77 (LAMTVMILAEKLFVAAVCLAV) form a helical membrane-spanning segment. Asp157 is an active-site residue. Substrate contacts are provided by Asp216 and Asp218. Asp310 is a catalytic residue. Transmembrane regions (helical) follow at residues 389–409 (IAAHTVTFIYYCFVIPVSVWL), 412–432 (IEIPLWGVVYVPTVITLCKAV), 522–542 (YSEIFVGICIILSGFYDVLYA), and 548–568 (IFLFIQGLAFLIVGFDYIGVC).

The protein belongs to the glycosyltransferase 2 family. Plant cellulose synthase-like A subfamily.

It is found in the golgi apparatus membrane. The catalysed reaction is GDP-mannose + (glucomannan)n = GDP + (glucomannan)n+1.. Functionally, probable mannan synthase which consists of a 4-beta-mannosyltransferase activity on mannan using GDP-mannose. The beta-1,4-mannan product is the backbone for galactomannan synthesis by galactomannan galactosyltransferase. Galactomannan is a noncellulosic polysaccharides of plant cell wall. In Oryza sativa subsp. japonica (Rice), this protein is Probable glucomannan 4-beta-mannosyltransferase 11.